The following is a 111-amino-acid chain: Ribonuclease P protein component (111 aa).

It belongs to the RnpA family. In terms of assembly, consists of a catalytic RNA component (M1 or rnpB) and a protein subunit.

It carries out the reaction Endonucleolytic cleavage of RNA, removing 5'-extranucleotides from tRNA precursor.. Functionally, RNaseP catalyzes the removal of the 5'-leader sequence from pre-tRNA to produce the mature 5'-terminus. It can also cleave other RNA substrates such as 4.5S RNA. The protein component plays an auxiliary but essential role in vivo by binding to the 5'-leader sequence and broadening the substrate specificity of the ribozyme. In Clostridium botulinum (strain 657 / Type Ba4), this protein is Ribonuclease P protein component.